The sequence spans 151 residues: Acidic phospholipase A2 1 (151 aa).

Residues 1–27 form the signal peptide; sequence MYPAHLLVLLAVCVSLLGAASIPARPL. 7 disulfides stabilise this stretch: C38/C104, C54/C151, C56/C72, C71/C132, C78/C125, C88/C118, and C111/C123. Residues Y55, G57, and G59 each contribute to the Ca(2+) site. H75 is a catalytic residue. D76 is a binding site for Ca(2+). The active site involves D126.

The protein belongs to the phospholipase A2 family. Group I subfamily. D49 sub-subfamily. It depends on Ca(2+) as a cofactor. Expressed by the venom gland.

It is found in the secreted. It catalyses the reaction a 1,2-diacyl-sn-glycero-3-phosphocholine + H2O = a 1-acyl-sn-glycero-3-phosphocholine + a fatty acid + H(+). In terms of biological role, PLA2 catalyzes the calcium-dependent hydrolysis of the 2-acyl groups in 3-sn-phosphoglycerides. This Tropidechis carinatus (Australian rough-scaled snake) protein is Acidic phospholipase A2 1.